Reading from the N-terminus, the 52-residue chain is Small ribosomal subunit protein uS14 (52 aa).

Zn(2+) is bound by residues cysteine 17, cysteine 20, cysteine 35, and cysteine 38.

This sequence belongs to the universal ribosomal protein uS14 family. Zinc-binding uS14 subfamily. Part of the 30S ribosomal subunit. The cofactor is Zn(2+).

Binds 16S rRNA, required for the assembly of 30S particles. The polypeptide is Small ribosomal subunit protein uS14 (Halobacterium salinarum (strain ATCC 700922 / JCM 11081 / NRC-1) (Halobacterium halobium)).